The chain runs to 366 residues: 1-deoxy-D-xylulose 5-phosphate reductoisomerase (366 aa).

8 residues coordinate NADPH: T7, G8, S9, I10, G31, K32, N33, and N113. 1-deoxy-D-xylulose 5-phosphate is bound at residue K114. E115 provides a ligand contact to NADPH. D133 lines the Mn(2+) pocket. 1-deoxy-D-xylulose 5-phosphate is bound by residues S134, E135, S158, and H181. E135 serves as a coordination point for Mn(2+). An NADPH-binding site is contributed by G187. Residues S194, N199, K200, and E203 each coordinate 1-deoxy-D-xylulose 5-phosphate. E203 is a Mn(2+) binding site.

Belongs to the DXR family. Mg(2+) is required as a cofactor. Mn(2+) serves as cofactor.

It catalyses the reaction 2-C-methyl-D-erythritol 4-phosphate + NADP(+) = 1-deoxy-D-xylulose 5-phosphate + NADPH + H(+). It functions in the pathway isoprenoid biosynthesis; isopentenyl diphosphate biosynthesis via DXP pathway; isopentenyl diphosphate from 1-deoxy-D-xylulose 5-phosphate: step 1/6. Functionally, catalyzes the NADPH-dependent rearrangement and reduction of 1-deoxy-D-xylulose-5-phosphate (DXP) to 2-C-methyl-D-erythritol 4-phosphate (MEP). The protein is 1-deoxy-D-xylulose 5-phosphate reductoisomerase of Helicobacter pylori (strain G27).